We begin with the raw amino-acid sequence, 72 residues long: Exodeoxyribonuclease 7 small subunit (72 aa).

Belongs to the XseB family. In terms of assembly, heterooligomer composed of large and small subunits.

The protein localises to the cytoplasm. It carries out the reaction Exonucleolytic cleavage in either 5'- to 3'- or 3'- to 5'-direction to yield nucleoside 5'-phosphates.. Its function is as follows. Bidirectionally degrades single-stranded DNA into large acid-insoluble oligonucleotides, which are then degraded further into small acid-soluble oligonucleotides. The polypeptide is Exodeoxyribonuclease 7 small subunit (Clostridium kluyveri (strain NBRC 12016)).